We begin with the raw amino-acid sequence, 431 residues long: Glutamate--tRNA ligase 1 (431 aa).

Residues 6–16 (PSPTGDMHIGN) carry the 'HIGH' region motif. The 'KMSKS' region motif lies at 235-239 (KMSKR). An ATP-binding site is contributed by K238.

It belongs to the class-I aminoacyl-tRNA synthetase family. Glutamate--tRNA ligase type 1 subfamily. Monomer.

The protein resides in the cytoplasm. It catalyses the reaction tRNA(Glu) + L-glutamate + ATP = L-glutamyl-tRNA(Glu) + AMP + diphosphate. Catalyzes the attachment of glutamate to tRNA(Glu) in a two-step reaction: glutamate is first activated by ATP to form Glu-AMP and then transferred to the acceptor end of tRNA(Glu). The sequence is that of Glutamate--tRNA ligase 1 from Campylobacter jejuni (strain RM1221).